We begin with the raw amino-acid sequence, 81 residues long: Photosystem I iron-sulfur center (81 aa).

2 consecutive 4Fe-4S ferredoxin-type domains span residues 2 to 31 (AHSVKIYDTCIGCTQCVRACPTDVLEMIPW) and 39 to 68 (IASAPRTEDCVGCKRCESACPTDFLSVRVY). [4Fe-4S] cluster contacts are provided by C11, C14, C17, C21, C48, C51, C54, and C58.

The eukaryotic PSI reaction center is composed of at least 11 subunits. Requires [4Fe-4S] cluster as cofactor.

It localises to the plastid. Its subcellular location is the chloroplast thylakoid membrane. The catalysed reaction is reduced [plastocyanin] + hnu + oxidized [2Fe-2S]-[ferredoxin] = oxidized [plastocyanin] + reduced [2Fe-2S]-[ferredoxin]. Functionally, apoprotein for the two 4Fe-4S centers FA and FB of photosystem I (PSI); essential for photochemical activity. FB is the terminal electron acceptor of PSI, donating electrons to ferredoxin. The C-terminus interacts with PsaA/B/D and helps assemble the protein into the PSI complex. Required for binding of PsaD and PsaE to PSI. PSI is a plastocyanin-ferredoxin oxidoreductase, converting photonic excitation into a charge separation, which transfers an electron from the donor P700 chlorophyll pair to the spectroscopically characterized acceptors A0, A1, FX, FA and FB in turn. In Cycas taitungensis (Prince sago), this protein is Photosystem I iron-sulfur center.